The primary structure comprises 251 residues: Cytochrome P450 monooxygenase ppzG (251 aa).

Residue C250 participates in heme binding.

The protein belongs to the cytochrome P450 family. Requires heme as cofactor.

The protein operates within secondary metabolite biosynthesis. In terms of biological role, cytochrome P450 monooxygenase; part of the gene cluster that mediates the biosynthesis of pyrrolopyrazines, secondary metabolites showing insecticidal activity. The role of ppzG within the pathway has still to be determined. The single multifunctional NRPS ppzA is sufficient to produce peramine via condensation of 1-pyrroline-5-carboxylate and arginine, N-methylation of the alpha-amino group of arginine and reduction of the thioester and the cyclization to form an iminium ion resulting in release from the peptide synthetase. Deprotonation of this intermediate and oxidation of the pyrroline ring would give rise to peramine. In Epichloe species that produce only peramine, the peramine synthetase gene is not localized in a gene cluster, in contrast to Metarhizium species that contain additional pyrrolopyrazine biosynthesis genes. The 2-oxoglutarate-Fe(II) type oxidoreductase ppzC hydroxylates peramine to yield the newly identified compound 8-hydroxyperamine whereas ppzD converts L-proline into trans-4-hydroxy-L-proline, a precursor of peramine biosynthesis. This chain is Cytochrome P450 monooxygenase ppzG, found in Metarhizium rileyi (strain RCEF 4871) (Nomuraea rileyi).